Reading from the N-terminus, the 250-residue chain is 3-deoxy-manno-octulosonate cytidylyltransferase (250 aa).

The protein belongs to the KdsB family.

Its subcellular location is the cytoplasm. It carries out the reaction 3-deoxy-alpha-D-manno-oct-2-ulosonate + CTP = CMP-3-deoxy-beta-D-manno-octulosonate + diphosphate. Its pathway is nucleotide-sugar biosynthesis; CMP-3-deoxy-D-manno-octulosonate biosynthesis; CMP-3-deoxy-D-manno-octulosonate from 3-deoxy-D-manno-octulosonate and CTP: step 1/1. The protein operates within bacterial outer membrane biogenesis; lipopolysaccharide biosynthesis. Functionally, activates KDO (a required 8-carbon sugar) for incorporation into bacterial lipopolysaccharide in Gram-negative bacteria. This is 3-deoxy-manno-octulosonate cytidylyltransferase from Francisella tularensis subsp. holarctica (strain FTNF002-00 / FTA).